Here is a 127-residue protein sequence, read N- to C-terminus: Glycine cleavage system H protein 1 (127 aa).

One can recognise a Lipoyl-binding domain in the interval 20 to 101; the sequence is SVTVGITAYA…MGEGWFFRFI (82 aa). Lysine 60 bears the N6-lipoyllysine mark.

This sequence belongs to the GcvH family. As to quaternary structure, the glycine cleavage system is composed of four proteins: P, T, L and H. Requires (R)-lipoate as cofactor.

Its function is as follows. The glycine cleavage system catalyzes the degradation of glycine. The H protein shuttles the methylamine group of glycine from the P protein to the T protein. The chain is Glycine cleavage system H protein 1 from Pseudomonas putida (strain ATCC 47054 / DSM 6125 / CFBP 8728 / NCIMB 11950 / KT2440).